The primary structure comprises 181 residues: ADP-ribosylation factor 1 (181 aa).

Residue G2 is the site of N-myristoyl glycine attachment. Residues 3-16 are important for the stable binding to the membranes; that stretch reads LYVSRLFNRLFQKK. Residues 27–32, 126–129, and A160 contribute to the GTP site; these read AAGKTT and NKQD.

This sequence belongs to the small GTPase superfamily. Arf family. In terms of assembly, may interact with GTPase RAB5b.

The protein localises to the golgi apparatus membrane. The catalysed reaction is GTP + H2O = GDP + phosphate + H(+). Its activity is regulated as follows. Alternates between an inactive GDP-bound form and an active GTP-bound form. Intrinsic GTPase activity is almost undetectable in vitro. Activated by a guanine nucleotide-exchange factor (GEF) and inactivated by GTPase-activating protein ARFGAP1. Small GTPase involved in protein trafficking between different compartments. Modulates vesicle budding and uncoating within the Golgi complex. In its GTP-bound form, triggers the recruitment of coatomer proteins to the Golgi membrane. The hydrolysis of ARF1-bound GTP, which is mediated by ARFGAPs proteins, is required for dissociation of coat proteins from Golgi membranes and vesicles. Regulates the transport of N-acylated AK2 to the parasitophorous vacuole membrane. May be involved in the activation of lipid kinase PIP5K. This is ADP-ribosylation factor 1 from Plasmodium falciparum (isolate 3D7).